A 190-amino-acid polypeptide reads, in one-letter code: Ribosome-recycling factor (190 aa).

It belongs to the RRF family.

The protein localises to the cytoplasm. Functionally, responsible for the release of ribosomes from messenger RNA at the termination of protein biosynthesis. May increase the efficiency of translation by recycling ribosomes from one round of translation to another. In Fusobacterium nucleatum subsp. nucleatum (strain ATCC 25586 / DSM 15643 / BCRC 10681 / CIP 101130 / JCM 8532 / KCTC 2640 / LMG 13131 / VPI 4355), this protein is Ribosome-recycling factor.